The primary structure comprises 71 residues: Immune-induced peptide 18 (71 aa).

The first 24 residues, 1 to 24 (MKLIALCCLLLLGLLGFLAAPGVA), serve as a signal peptide directing secretion. The propeptide occupies 25–26 (SP). The segment at 26–71 (PSRHTGPGNGSGSGAGSGNPFRSPSSQQRPLYYDAPIGKPSKTMYA) is disordered. Positions 32-42 (PGNGSGSGAGS) are enriched in gly residues.

As to expression, hemolymph (at protein level).

It is found in the secreted. The chain is Immune-induced peptide 18 (IM18) from Drosophila melanogaster (Fruit fly).